We begin with the raw amino-acid sequence, 171 residues long: UPF0725 protein At3g25080 (171 aa).

It belongs to the UPF0725 (EMB2204) family.

This is UPF0725 protein At3g25080 from Arabidopsis thaliana (Mouse-ear cress).